Consider the following 444-residue polypeptide: Transmembrane protein with metallophosphoesterase domain (444 aa).

A run of 5 helical transmembrane segments spans residues 7–27 (LSLG…MIVS), 43–63 (LFRL…SIYI), 87–107 (MVVA…IFLV), 114–134 (FSLV…FLCV), and 162–182 (LALR…VGLL). A divalent metal cation contacts are provided by D214, H216, D246, N277, H382, and H384.

This sequence belongs to the metallophosphoesterase superfamily. LOC643853 family. A divalent metal cation serves as cofactor.

The protein localises to the membrane. This Bos taurus (Bovine) protein is Transmembrane protein with metallophosphoesterase domain (TMPPE).